Here is a 110-residue protein sequence, read N- to C-terminus: Ubiquitin-related modifier 1 (110 aa).

At Gly-110 the chain carries 1-thioglycine. Residue Gly-110 forms a Glycyl lysine isopeptide (Gly-Lys) (interchain with K-? in acceptor proteins) linkage.

This sequence belongs to the URM1 family. Homodimer; homodimerization may provide an autoprotection to the highly active C-terminal residue before attacking its substrates. Forms a conjugate with the target protein AHP1. In terms of processing, C-terminal thiocarboxylation occurs in 2 steps, it is first acyl-adenylated (-COAMP) via the hesA/moeB/thiF part of UBA4, then thiocarboxylated (-COSH) via the rhodanese domain of UBA4.

It localises to the cytoplasm. Its pathway is tRNA modification; 5-methoxycarbonylmethyl-2-thiouridine-tRNA biosynthesis. Acts as a sulfur carrier required for 2-thiolation of mcm(5)S(2)U at tRNA wobble positions of cytosolic tRNA(Lys), tRNA(Glu) and tRNA(Gln). Serves as sulfur donor in tRNA 2-thiolation reaction by being thiocarboxylated (-COSH) at its C-terminus by the MOCS3 homolog UBA4. The sulfur is then transferred to tRNA to form 2-thiolation of mcm(5)S(2)U. Prior mcm(5) tRNA modification by the elongator complex is required for 2-thiolation. Also acts as a ubiquitin-like protein (UBL) that is covalently conjugated via an isopeptide bond to lysine residues of target proteins such as AHP1. Conjugation does not depend on the canonical cascade of E2 ubiquitin-conjugating enzymes and/or E3 ligases. The conjugation reaction requires a thiocarboxylated C-terminus of URM1 and a peroxidatic cysteine in the target protein, as the sulfur atom of the URM1 thiocarboxyl group is transferred to redox-active cysteine residues in the target protein. Oxidative stress specifically induces the formation of UBL-protein conjugates. Covalent modification with URM1 promotes the phase separation of a wide range of proteins into condensates like stress granules. The polypeptide is Ubiquitin-related modifier 1 (Chaetomium thermophilum (strain DSM 1495 / CBS 144.50 / IMI 039719) (Thermochaetoides thermophila)).